Here is a 666-residue protein sequence, read N- to C-terminus: E3 ubiquitin-protein ligase MBR2 (666 aa).

4 stretches are compositionally biased toward polar residues: residues 1–14 (MQGP…STGI), 23–35 (CSTN…NNIL), 42–58 (FPNN…ASSS), and 73–88 (SSSR…SNGS). 6 disordered regions span residues 1-58 (MQGP…ASSS), 73-95 (SSSR…RQLL), 155-179 (SLGS…GLGS), 221-329 (SSLS…DGQP), 400-433 (NPST…TPHN), and 457-491 (GASL…RQRR). Positions 221–239 (SSLSLSMPSQNSPNVNNQS) are enriched in low complexity. Polar residues-rich tracts occupy residues 258–268 (AFPSTRSTETI), 286–303 (FSFT…QLPA), and 414–433 (GSSS…TPHN). An RING-type; atypical zinc finger spans residues 619-660 (CCVCQEEYAEGDDLGTLGCGHEFHTACVKQWLMLKNLCPICK).

The protein belongs to the RING-type zinc finger family. In terms of assembly, interacts with MED25 and UBC11.

The catalysed reaction is S-ubiquitinyl-[E2 ubiquitin-conjugating enzyme]-L-cysteine + [acceptor protein]-L-lysine = [E2 ubiquitin-conjugating enzyme]-L-cysteine + N(6)-ubiquitinyl-[acceptor protein]-L-lysine.. The protein operates within protein modification; protein ubiquitination. Functionally, E3 ubiquitin-protein ligase that functions as a regulator of MED25 stability by targeting MED25 for degradation in a RING-H2-dependent way. Proteasome-dependent degradation of MED25 seems to activate its function as positive regulator of FLOWERING LOCUS T (FT) and is important to induce the expression of FT and consequently to promote flowering. May function downstream of HAL3 and be required for HAL3-regulated plant growth. Activation of MBR2 by HAL3 may lead to the degradation of cell cycle suppressors, resulting in enhancement of cell division and plant growth. The chain is E3 ubiquitin-protein ligase MBR2 (MBR2) from Arabidopsis thaliana (Mouse-ear cress).